Consider the following 344-residue polypeptide: S-methyl-5'-thioadenosine phosphorylase (344 aa).

Phosphate-binding positions include Thr45, 88–89 (RH), and 121–122 (SA). A substrate-binding site is contributed by Met238. Residue Ser239 participates in phosphate binding. 262–264 (DYD) is a binding site for substrate.

This sequence belongs to the PNP/MTAP phosphorylase family. MTAP subfamily. In terms of assembly, homotrimer.

The protein localises to the cytoplasm. Its subcellular location is the nucleus. The enzyme catalyses S-methyl-5'-thioadenosine + phosphate = 5-(methylsulfanyl)-alpha-D-ribose 1-phosphate + adenine. It participates in amino-acid biosynthesis; L-methionine biosynthesis via salvage pathway; S-methyl-5-thio-alpha-D-ribose 1-phosphate from S-methyl-5'-thioadenosine (phosphorylase route): step 1/1. In terms of biological role, catalyzes the reversible phosphorylation of S-methyl-5'-thioadenosine (MTA) to adenine and 5-methylthioribose-1-phosphate. Involved in the breakdown of MTA, a major by-product of polyamine biosynthesis. Responsible for the first step in the methionine salvage pathway after MTA has been generated from S-adenosylmethionine. Has broad substrate specificity with 6-aminopurine nucleosides as preferred substrates. This chain is S-methyl-5'-thioadenosine phosphorylase, found in Candida albicans (strain WO-1) (Yeast).